Consider the following 211-residue polypeptide: Glycerol-3-phosphate acyltransferase 2 (211 aa).

Helical transmembrane passes span 6 to 26 (FASLFILAYLLGSFPAGVVVG), 57 to 77 (IIVFLIDFFKGTLATLIPVIF), 82 to 102 (HYLCLIFGLVAILGHAFPIFL), 124 to 144 (FFLICAVIFIPILFITSMVSL), and 148 to 168 (ISVVLIFIASFFFHDIALSII).

This sequence belongs to the PlsY family. As to quaternary structure, probably interacts with PlsX.

The protein localises to the cell membrane. It carries out the reaction an acyl phosphate + sn-glycerol 3-phosphate = a 1-acyl-sn-glycero-3-phosphate + phosphate. It functions in the pathway lipid metabolism; phospholipid metabolism. Its function is as follows. Catalyzes the transfer of an acyl group from acyl-phosphate (acyl-PO(4)) to glycerol-3-phosphate (G3P) to form lysophosphatidic acid (LPA). This enzyme utilizes acyl-phosphate as fatty acyl donor, but not acyl-CoA or acyl-ACP. This Lactobacillus acidophilus (strain ATCC 700396 / NCK56 / N2 / NCFM) protein is Glycerol-3-phosphate acyltransferase 2.